We begin with the raw amino-acid sequence, 277 residues long: Shikimate dehydrogenase (NADP(+)) (277 aa).

Shikimate is bound by residues 15-17 (SLS) and T62. Catalysis depends on K66, which acts as the Proton acceptor. Shikimate-binding residues include N87 and D102. NADP(+)-binding positions include 127-131 (GAGGA), 151-156 (NRTVDK), and I219. A shikimate-binding site is contributed by Y221. G242 is an NADP(+) binding site.

It belongs to the shikimate dehydrogenase family. In terms of assembly, homodimer.

The catalysed reaction is shikimate + NADP(+) = 3-dehydroshikimate + NADPH + H(+). The protein operates within metabolic intermediate biosynthesis; chorismate biosynthesis; chorismate from D-erythrose 4-phosphate and phosphoenolpyruvate: step 4/7. Its function is as follows. Involved in the biosynthesis of the chorismate, which leads to the biosynthesis of aromatic amino acids. Catalyzes the reversible NADPH linked reduction of 3-dehydroshikimate (DHSA) to yield shikimate (SA). The sequence is that of Shikimate dehydrogenase (NADP(+)) from Bacillus cereus (strain AH187).